Consider the following 275-residue polypeptide: Ditrans,polycis-undecaprenyl-diphosphate synthase ((2E,6E)-farnesyl-diphosphate specific) (275 aa).

D45 is a catalytic residue. Residue D45 coordinates Mg(2+). Substrate is bound by residues 46-49, W50, R58, H62, and 90-92; these read GNGR and SSE. N93 serves as the catalytic Proton acceptor. Residues W94, R96, R213, and 219 to 221 each bind substrate; that span reads RIS. E232 is a binding site for Mg(2+).

The protein belongs to the UPP synthase family. As to quaternary structure, homodimer. Mg(2+) is required as a cofactor.

The catalysed reaction is 8 isopentenyl diphosphate + (2E,6E)-farnesyl diphosphate = di-trans,octa-cis-undecaprenyl diphosphate + 8 diphosphate. Catalyzes the sequential condensation of isopentenyl diphosphate (IPP) with (2E,6E)-farnesyl diphosphate (E,E-FPP) to yield (2Z,6Z,10Z,14Z,18Z,22Z,26Z,30Z,34E,38E)-undecaprenyl diphosphate (di-trans,octa-cis-UPP). UPP is the precursor of glycosyl carrier lipid in the biosynthesis of bacterial cell wall polysaccharide components such as peptidoglycan and lipopolysaccharide. This is Ditrans,polycis-undecaprenyl-diphosphate synthase ((2E,6E)-farnesyl-diphosphate specific) from Shewanella oneidensis (strain ATCC 700550 / JCM 31522 / CIP 106686 / LMG 19005 / NCIMB 14063 / MR-1).